The primary structure comprises 587 residues: Putative adenylate cyclase 3 (587 aa).

The Guanylate cyclase domain occupies 12 to 127; that stretch reads AILAADAVGY…DGVNVAARIE (116 aa). TPR repeat units follow at residues 343-376, 421-454, 455-488, 490-522, and 524-556; these read LLVR…DPGM, PQGH…DPNS, ANAY…DPQF, LSLH…APRS, and MTRF…NPSF.

This sequence belongs to the adenylyl cyclase class-3 family.

The enzyme catalyses ATP = 3',5'-cyclic AMP + diphosphate. The polypeptide is Putative adenylate cyclase 3 (cya3) (Rhizobium meliloti (strain 1021) (Ensifer meliloti)).